The primary structure comprises 91 residues: Acylphosphatase (91 aa).

An Acylphosphatase-like domain is found at 6 to 91; the sequence is CMRCYISGRV…WKDYISFDVL (86 aa). Residues arginine 21 and asparagine 39 contribute to the active site.

The protein belongs to the acylphosphatase family.

It carries out the reaction an acyl phosphate + H2O = a carboxylate + phosphate + H(+). This Legionella pneumophila (strain Paris) protein is Acylphosphatase (acyP).